The sequence spans 313 residues: tRNA dimethylallyltransferase (313 aa).

Position 10–17 (glycine 10–threonine 17) interacts with ATP. A substrate-binding site is contributed by threonine 12–threonine 17. Interaction with substrate tRNA stretches follow at residues aspartate 35–methionine 38, glutamine 159–arginine 163, and arginine 240–arginine 245.

Belongs to the IPP transferase family. As to quaternary structure, monomer. It depends on Mg(2+) as a cofactor.

It catalyses the reaction adenosine(37) in tRNA + dimethylallyl diphosphate = N(6)-dimethylallyladenosine(37) in tRNA + diphosphate. Functionally, catalyzes the transfer of a dimethylallyl group onto the adenine at position 37 in tRNAs that read codons beginning with uridine, leading to the formation of N6-(dimethylallyl)adenosine (i(6)A). In Legionella pneumophila subsp. pneumophila (strain Philadelphia 1 / ATCC 33152 / DSM 7513), this protein is tRNA dimethylallyltransferase.